The chain runs to 358 residues: Photosystem II protein D1 2 (358 aa).

3 helical membrane passes run 28-45 (YVGW…AATI), 117-132 (HFLI…QWEL), and 141-155 (WICV…AAMV). A chlorophyll a-binding site is contributed by histidine 117. Tyrosine 125 contributes to the pheophytin a binding site. [CaMn4O5] cluster contacts are provided by aspartate 169 and glutamate 188. The helical transmembrane segment at 196–217 (FHMLGVAGVFGGSLFSAMHGSL) threads the bilayer. Histidine 197 serves as a coordination point for chlorophyll a. Residues histidine 214 and 263–264 (SF) contribute to the a quinone site. Histidine 214 contributes to the Fe cation binding site. Histidine 271 contributes to the Fe cation binding site. A helical membrane pass occupies residues 273 to 287 (FLAAWPVVGIWFTSM). Residues histidine 331, glutamate 332, aspartate 341, and alanine 343 each coordinate [CaMn4O5] cluster. Residues 344-358 (TTESAPVALQAPAVG) constitute a propeptide that is removed on maturation.

Belongs to the reaction center PufL/M/PsbA/D family. PSII is composed of 1 copy each of membrane proteins PsbA, PsbB, PsbC, PsbD, PsbE, PsbF, PsbH, PsbI, PsbJ, PsbK, PsbL, PsbM, PsbT, PsbX, PsbY, PsbZ, Psb30/Ycf12, peripheral proteins PsbO, CyanoQ (PsbQ), PsbU, PsbV and a large number of cofactors. It forms dimeric complexes. The D1/D2 heterodimer binds P680, chlorophylls that are the primary electron donor of PSII, and subsequent electron acceptors. It shares a non-heme iron and each subunit binds pheophytin, quinone, additional chlorophylls, carotenoids and lipids. D1 provides most of the ligands for the Mn4-Ca-O5 cluster of the oxygen-evolving complex (OEC). There is also a Cl(-1) ion associated with D1 and D2, which is required for oxygen evolution. The PSII complex binds additional chlorophylls, carotenoids and specific lipids. is required as a cofactor. In terms of processing, tyr-160 forms a radical intermediate that is referred to as redox-active TyrZ, YZ or Y-Z. Post-translationally, C-terminally processed by CtpA; processing is essential to allow assembly of the oxygen-evolving complex and thus photosynthetic growth.

The protein localises to the cellular thylakoid membrane. The enzyme catalyses 2 a plastoquinone + 4 hnu + 2 H2O = 2 a plastoquinol + O2. Photosystem II (PSII) is a light-driven water:plastoquinone oxidoreductase that uses light energy to abstract electrons from H(2)O, generating O(2) and a proton gradient subsequently used for ATP formation. It consists of a core antenna complex that captures photons, and an electron transfer chain that converts photonic excitation into a charge separation. The D1/D2 (PsbA/PsbD) reaction center heterodimer binds P680, the primary electron donor of PSII as well as several subsequent electron acceptors. The chain is Photosystem II protein D1 2 from Synechococcus sp. (strain RCC307).